The chain runs to 366 residues: Cobalt-precorrin-5B C(1)-methyltransferase (366 aa).

This sequence belongs to the CbiD family.

It catalyses the reaction Co-precorrin-5B + S-adenosyl-L-methionine = Co-precorrin-6A + S-adenosyl-L-homocysteine. Its pathway is cofactor biosynthesis; adenosylcobalamin biosynthesis; cob(II)yrinate a,c-diamide from sirohydrochlorin (anaerobic route): step 6/10. Catalyzes the methylation of C-1 in cobalt-precorrin-5B to form cobalt-precorrin-6A. This chain is Cobalt-precorrin-5B C(1)-methyltransferase, found in Methanococcus maripaludis (strain C7 / ATCC BAA-1331).